A 176-amino-acid polypeptide reads, in one-letter code: Large ribosomal subunit protein uL6 (176 aa).

It belongs to the universal ribosomal protein uL6 family. In terms of assembly, part of the 50S ribosomal subunit.

In terms of biological role, this protein binds to the 23S rRNA, and is important in its secondary structure. It is located near the subunit interface in the base of the L7/L12 stalk, and near the tRNA binding site of the peptidyltransferase center. This is Large ribosomal subunit protein uL6 from Lactobacillus delbrueckii subsp. bulgaricus (strain ATCC 11842 / DSM 20081 / BCRC 10696 / JCM 1002 / NBRC 13953 / NCIMB 11778 / NCTC 12712 / WDCM 00102 / Lb 14).